A 90-amino-acid polypeptide reads, in one-letter code: Small ribosomal subunit protein uS19 (90 aa).

The protein belongs to the universal ribosomal protein uS19 family.

Functionally, protein S19 forms a complex with S13 that binds strongly to the 16S ribosomal RNA. The protein is Small ribosomal subunit protein uS19 of Hydrogenovibrio crunogenus (strain DSM 25203 / XCL-2) (Thiomicrospira crunogena).